Reading from the N-terminus, the 241-residue chain is tRNA (guanine-N(1)-)-methyltransferase (241 aa).

Residues Gly-123 and 143-148 (IGDYVL) each bind S-adenosyl-L-methionine.

Belongs to the RNA methyltransferase TrmD family. In terms of assembly, homodimer.

Its subcellular location is the cytoplasm. The enzyme catalyses guanosine(37) in tRNA + S-adenosyl-L-methionine = N(1)-methylguanosine(37) in tRNA + S-adenosyl-L-homocysteine + H(+). Specifically methylates guanosine-37 in various tRNAs. The protein is tRNA (guanine-N(1)-)-methyltransferase of Roseobacter denitrificans (strain ATCC 33942 / OCh 114) (Erythrobacter sp. (strain OCh 114)).